The following is a 591-amino-acid chain: Aspartate--tRNA ligase (591 aa).

Glu171 contributes to the L-aspartate binding site. The segment at 195-198 is aspartate; it reads QLFK. L-aspartate is bound at residue Arg217. ATP is bound by residues 217-219 and Gln226; that span reads RDE. L-aspartate is bound at residue His448. Position 482 (Glu482) interacts with ATP. Arg489 contacts L-aspartate. 534–537 contacts ATP; the sequence is GLDR.

This sequence belongs to the class-II aminoacyl-tRNA synthetase family. Type 1 subfamily. As to quaternary structure, homodimer.

The protein resides in the cytoplasm. The catalysed reaction is tRNA(Asp) + L-aspartate + ATP = L-aspartyl-tRNA(Asp) + AMP + diphosphate. Functionally, catalyzes the attachment of L-aspartate to tRNA(Asp) in a two-step reaction: L-aspartate is first activated by ATP to form Asp-AMP and then transferred to the acceptor end of tRNA(Asp). The polypeptide is Aspartate--tRNA ligase (Vibrio cholerae serotype O1 (strain ATCC 39541 / Classical Ogawa 395 / O395)).